The following is a 242-amino-acid chain: Glucosamine-6-phosphate deaminase (242 aa).

Residue D67 is the Proton acceptor; for enolization step of the active site. N136 acts as the For ring-opening step in catalysis. H138 functions as the Proton acceptor; for ring-opening step in the catalytic mechanism. E143 serves as the catalytic For ring-opening step.

The protein belongs to the glucosamine/galactosamine-6-phosphate isomerase family. NagB subfamily.

The enzyme catalyses alpha-D-glucosamine 6-phosphate + H2O = beta-D-fructose 6-phosphate + NH4(+). It participates in amino-sugar metabolism; N-acetylneuraminate degradation; D-fructose 6-phosphate from N-acetylneuraminate: step 5/5. Functionally, catalyzes the reversible isomerization-deamination of glucosamine 6-phosphate (GlcN6P) to form fructose 6-phosphate (Fru6P) and ammonium ion. The sequence is that of Glucosamine-6-phosphate deaminase from Clostridium perfringens (strain ATCC 13124 / DSM 756 / JCM 1290 / NCIMB 6125 / NCTC 8237 / Type A).